Here is a 759-residue protein sequence, read N- to C-terminus: ARF GTPase-activating protein GIT2 (759 aa).

An Arf-GAP domain is found at 1–124 (MSKRLRSNDV…AFVHRLPCRD (124 aa)). Residues 11–34 (CADCSGPDPSWASVNRGTLICDEC) form a C4-type zinc finger. ANK repeat units lie at residues 132-161 (DLSK…QANF), 166-198 (KGST…THDS), and 199-228 (SGKT…ELTD). Disordered regions lie at residues 376–422 (VSNQ…DLSD) and 469–641 (QSEN…PSTE). The span at 385–402 (QDNDQPDYDSVASDEDTD) shows a compositional bias: acidic residues. A coiled-coil region spans residues 451–478 (NNNLSGELRIMQKKLQTLQSENSSLRRQ). Polar residues predominate over residues 469-489 (QSENSSLRRQATASACQVQTA). The span at 555-569 (TSSSSLPSFPSTLSW) shows a compositional bias: low complexity. Over residues 570–583 (SRDESTRRASRLEK) the composition is skewed to basic and acidic residues.

In terms of assembly, may form heterooligomers with GIT1. Directly interacts with protein Piccolo/PCLO. Interacts with PPFIA1 and PPFIA2. Interacts with ARHGEF7. Identified in a complex with ARHGEF6 and BIN2. Interacts with PAK3. Interacts with PXN/paxillin. Interacts with TGFB1I1. Forms a complex with EFNB1 and GRB4/NCK2.

Its function is as follows. GTPase-activating protein for ADP ribosylation factor family members, including ARF1. The chain is ARF GTPase-activating protein GIT2 (Git2) from Rattus norvegicus (Rat).